A 385-amino-acid chain; its full sequence is Probable tRNA sulfurtransferase (385 aa).

One can recognise a THUMP domain in the interval 57–160 (DGVIERVKKV…RGNAYVFTDK (104 aa)). Residues 180–181 (ML), 205–206 (YY), Arg-262, Gly-284, and Gln-293 contribute to the ATP site.

The protein belongs to the ThiI family.

It localises to the cytoplasm. It catalyses the reaction [ThiI sulfur-carrier protein]-S-sulfanyl-L-cysteine + a uridine in tRNA + 2 reduced [2Fe-2S]-[ferredoxin] + ATP + H(+) = [ThiI sulfur-carrier protein]-L-cysteine + a 4-thiouridine in tRNA + 2 oxidized [2Fe-2S]-[ferredoxin] + AMP + diphosphate. The catalysed reaction is [ThiS sulfur-carrier protein]-C-terminal Gly-Gly-AMP + S-sulfanyl-L-cysteinyl-[cysteine desulfurase] + AH2 = [ThiS sulfur-carrier protein]-C-terminal-Gly-aminoethanethioate + L-cysteinyl-[cysteine desulfurase] + A + AMP + 2 H(+). It functions in the pathway cofactor biosynthesis; thiamine diphosphate biosynthesis. Catalyzes the ATP-dependent transfer of a sulfur to tRNA to produce 4-thiouridine in position 8 of tRNAs, which functions as a near-UV photosensor. Also catalyzes the transfer of sulfur to the sulfur carrier protein ThiS, forming ThiS-thiocarboxylate. This is a step in the synthesis of thiazole, in the thiamine biosynthesis pathway. The sulfur is donated as persulfide by IscS. In Clostridium perfringens (strain 13 / Type A), this protein is Probable tRNA sulfurtransferase.